A 222-amino-acid polypeptide reads, in one-letter code: N-(5'-phosphoribosyl)anthranilate isomerase (222 aa).

It belongs to the TrpF family.

It catalyses the reaction N-(5-phospho-beta-D-ribosyl)anthranilate = 1-(2-carboxyphenylamino)-1-deoxy-D-ribulose 5-phosphate. Its pathway is amino-acid biosynthesis; L-tryptophan biosynthesis; L-tryptophan from chorismate: step 3/5. This chain is N-(5'-phosphoribosyl)anthranilate isomerase, found in Xanthomonas campestris pv. campestris (strain 8004).